A 218-amino-acid chain; its full sequence is CTD kinase subunit gamma (218 aa).

In terms of domain architecture, CID spans 2-138 (DPFEGRMTFL…DAMATVEAHE (137 aa)). The interval 137–157 (HEQASKSGDTSTSGAISKNDI) is disordered. The segment covering 141–152 (SKSGDTSTSGAI) has biased composition (polar residues).

It belongs to the CTK3 family. As to quaternary structure, CTDK-I consists of three subunits, ctk1/lsk1, ctk2/lsc1 and ctk3 (also called alpha, beta and gamma).

Its subcellular location is the cytoplasm. It is found in the nucleus. Functionally, subunit of the CTDK-I complex, which hyperphosphorylates the C-terminal heptapeptide repeat domain (CTD) of the largest RNA polymerase II subunit. As part of the CTDK-I complex, involved in RNA polymerase II transcriptional elongation and pre-mRNA 3'-end processing. Together with ctk2, required for ctk1/lsk1 CTD kinase activation. In Schizosaccharomyces pombe (strain 972 / ATCC 24843) (Fission yeast), this protein is CTD kinase subunit gamma.